The following is a 396-amino-acid chain: uncharacterized protein (396 aa).

Helical transmembrane passes span 27-47 (LLIACLFISGSLSIVVFQICL) and 69-89 (FIVLLCMILNMVAPSSLNVTF). The HXXXXD motif motif lies at 117–122 (HQMYAD). Helical transmembrane passes span 123–143 (WIYLWWLSFVSNLGGNVYIIL) and 372–392 (LTPRILSYYGFFAFLILVFVM).

Belongs to the 1-acyl-sn-glycerol-3-phosphate acyltransferase family.

The protein localises to the membrane. This is an uncharacterized protein from Saccharomyces cerevisiae (strain ATCC 204508 / S288c) (Baker's yeast).